Consider the following 124-residue polypeptide: Fluoride-specific ion channel FluC 1 (124 aa).

The next 4 helical transmembrane spans lie at 7–27, 35–55, 63–83, and 101–121; these read ALTLAAAGAGSVLRYLLGGWV, FPWGTLAVNALGCLGLGLLQG, LLLVLGSGLLAGFTTFSTLML, and IVGTLALGLFALSAGARAGAW.

The protein belongs to the fluoride channel Fluc/FEX (TC 1.A.43) family.

It is found in the cell membrane. It carries out the reaction fluoride(in) = fluoride(out). Functionally, fluoride-specific ion channel. Important for reducing fluoride concentration in the cell, thus reducing its toxicity. In Rubrobacter xylanophilus (strain DSM 9941 / JCM 11954 / NBRC 16129 / PRD-1), this protein is Fluoride-specific ion channel FluC 1.